The primary structure comprises 322 residues: Probable transposase for insertion sequence element ISA1214 (322 aa).

The protein belongs to the transposase 11 family.

Functionally, involved in the transposition of the insertion sequence ISA1214. The protein is Probable transposase for insertion sequence element ISA1214 of Archaeoglobus fulgidus (strain ATCC 49558 / DSM 4304 / JCM 9628 / NBRC 100126 / VC-16).